A 184-amino-acid chain; its full sequence is ATP-dependent protease subunit HslV (184 aa).

Residue threonine 12 is part of the active site. Positions 167, 170, and 173 each coordinate Na(+).

The protein belongs to the peptidase T1B family. HslV subfamily. As to quaternary structure, a double ring-shaped homohexamer of HslV is capped on each side by a ring-shaped HslU homohexamer. The assembly of the HslU/HslV complex is dependent on binding of ATP.

The protein resides in the cytoplasm. It catalyses the reaction ATP-dependent cleavage of peptide bonds with broad specificity.. Allosterically activated by HslU binding. Functionally, protease subunit of a proteasome-like degradation complex believed to be a general protein degrading machinery. The sequence is that of ATP-dependent protease subunit HslV from Wolbachia pipientis subsp. Culex pipiens (strain wPip).